The primary structure comprises 514 residues: DNA damage-binding protein CMR1 (514 aa).

Residues 26-116 (NLDSLSQSIK…VKQEEKEELS (91 aa)) are disordered. The segment covering 34–44 (IKRELPRASET) has biased composition (basic and acidic residues). Residues 45–55 (KKRKTTPRTKA) are compositionally biased toward basic residues. Composition is skewed to basic and acidic residues over residues 56-65 (VKKEDVEPSR) and 92-116 (KFED…EELS). 7 WD repeats span residues 180-221 (ISHT…DDSE), 229-269 (PHGK…STEV), 280-320 (DYAL…KPLK), 327-367 (LHDK…KANA), 385-423 (SSRL…LIPD), 438-481 (GRWV…IAHL), and 483-514 (DSVG…YLFE).

Belongs to the WD repeat DDB2/WDR76 family.

Functionally, DNA-binding protein that binds to both single- and double-stranded DNA. Binds preferentially to UV-damaged DNA. May be involved in DNA-metabolic processes. The polypeptide is DNA damage-binding protein CMR1 (PRW1) (Scheffersomyces stipitis (strain ATCC 58785 / CBS 6054 / NBRC 10063 / NRRL Y-11545) (Yeast)).